The following is a 785-amino-acid chain: Formin-like protein 3 (785 aa).

The signal sequence occupies residues 1–20 (MGRLRLAFLAISLVVFVCVS). The disordered stretch occupies residues 96–145 (YDWLAPASSPNEPPAETPDESSPSPSEETPSVVAPSQSVPGPPRPPPQRE). The span at 115-134 (ESSPSPSEETPSVVAPSQSV) shows a compositional bias: low complexity. A helical transmembrane segment spans residues 154–174 (LIIAVASTAVLTFVFVALMFL). Disordered stretches follow at residues 184–228 (AVGS…KKRS), 241–329 (EFST…APKT), and 730–785 (ETTK…SSPS). Positions 201 to 223 (STGSTENSPTVASTSRKMFSVAS) are enriched in polar residues. Residues 256–303 (LKLPPGRSAPPPPPAAAPPPQPPPPPPPKPQPPPPPKIARPPPAPPKG) are compositionally biased toward pro residues. The FH2 domain occupies 321–747 (DSETGAPKTK…SGKKESEMTT (427 aa)). Residues 745 to 754 (MTTSDSNQPS) show a composition bias toward polar residues. Acidic residues predominate over residues 773–785 (SDDSDDEEDSSPS).

This sequence belongs to the formin-like family. Class-I subfamily.

It is found in the membrane. In terms of biological role, acts as actin nucleation factor that directs the formation of actin cables and polarized growth in pollen tubes. In Arabidopsis thaliana (Mouse-ear cress), this protein is Formin-like protein 3 (FH3).